Reading from the N-terminus, the 434-residue chain is Serine--tRNA ligase (434 aa).

230-232 (TSE) is a binding site for L-serine. Residues 261–263 (RRE) and Val-277 each bind ATP. Glu-284 is an L-serine binding site. An ATP-binding site is contributed by 348–351 (ELTS). Thr-393 provides a ligand contact to L-serine.

This sequence belongs to the class-II aminoacyl-tRNA synthetase family. Type-1 seryl-tRNA synthetase subfamily. As to quaternary structure, homodimer. The tRNA molecule binds across the dimer.

It is found in the cytoplasm. It catalyses the reaction tRNA(Ser) + L-serine + ATP = L-seryl-tRNA(Ser) + AMP + diphosphate + H(+). The catalysed reaction is tRNA(Sec) + L-serine + ATP = L-seryl-tRNA(Sec) + AMP + diphosphate + H(+). It participates in aminoacyl-tRNA biosynthesis; selenocysteinyl-tRNA(Sec) biosynthesis; L-seryl-tRNA(Sec) from L-serine and tRNA(Sec): step 1/1. Catalyzes the attachment of serine to tRNA(Ser). Is also able to aminoacylate tRNA(Sec) with serine, to form the misacylated tRNA L-seryl-tRNA(Sec), which will be further converted into selenocysteinyl-tRNA(Sec). The chain is Serine--tRNA ligase from Kocuria rhizophila (strain ATCC 9341 / DSM 348 / NBRC 103217 / DC2201).